The primary structure comprises 128 residues: MSEGGGQVSCIFAAPTRLCRWPALIECGVNLTQPLCEWMIQVARDRTLSLAWEVASLLTLSSSEVGLEGVGTIWPSSYSSEESSRNGAEQGRQLSIEGPFQGQNCPSHPAAALPLPMRGESQATSCQV.

A disordered region spans residues 77-128 (SYSSEESSRNGAEQGRQLSIEGPFQGQNCPSHPAAALPLPMRGESQATSCQV).

In terms of assembly, interacts with PRDX6. As to expression, highest expression in placenta, muscle, fetal brain, and adult brain, with lower expression in heart, kidney, stomach, testis, and adrenal gland. In the central nervous system, highest expression is in temporal lobe, hypothalamus, medulla and spinal cord, with lower expression in other brain regions.

The protein resides in the cytoplasm. It localises to the nucleus. The sequence is that of Saitohin (STH) from Homo sapiens (Human).